A 273-amino-acid chain; its full sequence is MLSRRGHRLSRFRKNKRRLRERLRQRIFFRDKVVPEAMEKPRVLVLTGAGISAESGIRTFRAADGLWEEHRVEDVATPEGFDRDPELVQAFYNARRRQLQQPEIQPNAAHLALAKLQDALGDRFLLVTQNIDNLHERAGNTNVIHMHGELLKVRCSQSGQVLDWTGDVTPEDKCHCCQFPAPLRPHVVWFGEMPLGMDEIYMALSMADVFIAIGTSGHVYPAAGFVHEAKLHGAHTVELNLEPSQVGNEFAEKYYGPASQVVPEFVEKLLEGL.

Residues 20–272 (RERLRQRIFF…PEFVEKLLEG (253 aa)) form the Deacetylase sirtuin-type domain. NAD(+) is bound at residue 48–67 (GAGISAESGIRTFRAADGLW). Y92 and R95 together coordinate substrate. 129 to 132 (QNID) contacts NAD(+). The active-site Proton acceptor is H147. Residues C155 and C174 each contribute to the Zn(2+) site. NAD(+)-binding positions include 214–216 (GTS), 240–242 (NLE), and A258.

Belongs to the sirtuin family. Class III subfamily. Requires Zn(2+) as cofactor.

The protein localises to the cytoplasm. The enzyme catalyses N(6)-acetyl-L-lysyl-[protein] + NAD(+) + H2O = 2''-O-acetyl-ADP-D-ribose + nicotinamide + L-lysyl-[protein]. It carries out the reaction N(6)-succinyl-L-lysyl-[protein] + NAD(+) + H2O = 2''-O-succinyl-ADP-D-ribose + nicotinamide + L-lysyl-[protein]. The catalysed reaction is N(6)-(2-hydroxyisobutanoyl)-L-lysyl-[protein] + NAD(+) + H2O = 2''-O-(2-hydroxyisobutanoyl)-ADP-D-ribose + nicotinamide + L-lysyl-[protein]. Functionally, NAD-dependent lysine deacetylase that specifically removes acetyl groups on target proteins. Also acts as a protein-lysine deacylase by mediating protein desuccinylation and de-2-hydroxyisobutyrylation. Modulates the activities of several proteins which are inactive in their acylated form. This Shigella flexneri protein is NAD-dependent protein deacylase.